The chain runs to 141 residues: Hemoglobin subunit alpha (141 aa).

The Globin domain occupies 1 to 141 (VLSSADKTNI…VSTVLTSKYR (141 aa)). Serine 3 carries the phosphoserine modification. Lysine 7 carries the post-translational modification N6-succinyllysine. Residue threonine 8 is modified to Phosphothreonine. An N6-succinyllysine modification is found at lysine 11. Lysine 16 bears the N6-acetyllysine; alternate mark. Position 16 is an N6-succinyllysine; alternate (lysine 16). At tyrosine 24 the chain carries Phosphotyrosine. At serine 35 the chain carries Phosphoserine. An N6-succinyllysine modification is found at lysine 40. Serine 49 is modified (phosphoserine). Residue histidine 58 coordinates O2. A heme b-binding site is contributed by histidine 87. A Phosphoserine modification is found at serine 102. Position 108 is a phosphothreonine (threonine 108). Phosphoserine occurs at positions 124 and 131. Phosphothreonine is present on residues threonine 134 and threonine 137. Serine 138 is modified (phosphoserine).

Belongs to the globin family. As to quaternary structure, heterotetramer of two alpha chains and two beta chains. As to expression, red blood cells.

Its function is as follows. Involved in oxygen transport from the lung to the various peripheral tissues. Functionally, hemopressin acts as an antagonist peptide of the cannabinoid receptor CNR1. Hemopressin-binding efficiently blocks cannabinoid receptor CNR1 and subsequent signaling. This chain is Hemoglobin subunit alpha (HBA), found in Rousettus aegyptiacus (Egyptian fruit bat).